The following is a 433-amino-acid chain: GTPase Obg (433 aa).

In terms of domain architecture, Obg spans 2–160 (PTFVDQTKIE…RVLRLELKLL (159 aa)). Residues 161 to 334 (ADVGLVGFPS…LMNDTATLVE (174 aa)) enclose the OBG-type G domain. GTP contacts are provided by residues 167–174 (GFPSVGKS), 192–196 (FTTLT), 214–217 (DLPG), 284–287 (SQMD), and 315–317 (SSV). The Mg(2+) site is built by S174 and T194. In terms of domain architecture, OCT spans 355–433 (YKAPQRNEFM…IGKFVFEFVQ (79 aa)).

Belongs to the TRAFAC class OBG-HflX-like GTPase superfamily. OBG GTPase family. In terms of assembly, monomer. Requires Mg(2+) as cofactor.

Its subcellular location is the cytoplasm. Its function is as follows. An essential GTPase which binds GTP, GDP and possibly (p)ppGpp with moderate affinity, with high nucleotide exchange rates and a fairly low GTP hydrolysis rate. Plays a role in control of the cell cycle, stress response, ribosome biogenesis and in those bacteria that undergo differentiation, in morphogenesis control. This Lactobacillus acidophilus (strain ATCC 700396 / NCK56 / N2 / NCFM) protein is GTPase Obg.